The chain runs to 765 residues: Zinc transporter ZIP6 (765 aa).

The first 20 residues, 1–20 (MATDLSVIMILTFALWVTSP), serve as a signal peptide directing secretion. Topologically, residues 21-335 (LHELQSTAAF…PKTYSLQIAW (315 aa)) are extracellular. Residue asparagine 68 is glycosylated (N-linked (GlcNAc...) asparagine). Basic and acidic residues-rich tracts occupy residues 96 to 135 (DHEHHADHEHHSDHEHHSDHEHHSDHEHHSDHEHHSDHEH) and 174 to 186 (RPAEHMNGRRNIK). Disordered regions lie at residues 96–196 (DHEH…EVTS) and 209–257 (VETI…SEPR). Residues 187–196 (ESASSSEVTS) are compositionally biased toward low complexity. The span at 224 to 233 (VNPSTPPSIT) shows a compositional bias: polar residues. A compositionally biased stretch (basic residues) spans 238-247 (VGRLSRLARK). The segment covering 248–257 (KSNESVSEPR) has biased composition (basic and acidic residues). N-linked (GlcNAc...) asparagine glycans are attached at residues asparagine 250, asparagine 275, and asparagine 292. Residues 336–356 (LGGFIAISIISFLSLLGVILV) traverse the membrane as a helical segment. The Cytoplasmic segment spans residues 357-365 (PLMNRVFFK). A helical membrane pass occupies residues 366–386 (FLLSFLVALAVGTLSGDALLH). At 387–433 (LLPHSHASHQHSHSHEEPAMEMKRGPLFSHLSAQNIEESSYFDSTWK) the chain is on the extracellular side. A helical transmembrane segment spans residues 434-454 (GLTALGGLYFMFLVEHVLTLI). Topologically, residues 455 to 667 (KQFKDKKKKN…LKAGMTVKQA (213 aa)) are cytoplasmic. Residues 458-519 (KDKKKKNQKK…EPSPFDSQQP (62 aa)) are disordered. Positions 475–495 (ESKKQLSKYDSQLSSNEEKVD) form a coiled coil. 2 positions are modified to phosphoserine: serine 481 and serine 488. A compositionally biased stretch (basic and acidic residues) spans 490–508 (NEEKVDPGERPESYLRADS). The span at 509-519 (QEPSPFDSQQP) shows a compositional bias: polar residues. Residues 668 to 688 (VLYNALSAMLAYLGMATGIFI) form a helical membrane-spanning segment. At 689 to 696 (GHYAENVS) the chain is on the extracellular side. The N-linked (GlcNAc...) asparagine glycan is linked to asparagine 694. The chain crosses the membrane as a helical span at residues 697 to 717 (MWIFALTAGLFMYVALVDMVP). The Cytoplasmic portion of the chain corresponds to 718–734 (EMLHNDASDHGCSRWGY). A helical membrane pass occupies residues 735-755 (FFLQNAGILLGFGIMLLISIF). Topologically, residues 756–765 (EHKIVFRINF) are extracellular.

This sequence belongs to the ZIP transporter (TC 2.A.5) family. Interacts with SLC39A10; which triggers cells to undergo EMT and mitosis. Found in a complex with SLC39A6, SLC39A10 and with the 'Ser-727' phosphorylated form of STAT3 throughout mitosis. Found in a complex with SLC39A6, SLC39A10 and with NCAM1; this complex controls NCAM1 phosphorylation and integration into focal adhesion complexes during epithelial-to-mesenchymal transition (EMT). Found in a complex with SLC39A6, SLC39A10 and with GSK3B that controls NCAM1 phosphorylation. In terms of processing, cleaved on the N-terminus before locating to the plasma membrane. N-glycosylated. Post-translationally, phosphorylated by ZAP70 in response to TCR stimulation leading to its activation. In terms of tissue distribution, highly expressed in the brain and testis. In the brain strongly expressed in the CA1 and CA3 regions, Purkinje cells in cerebellum and dentate gyrus in hippocampus. In testis found in spermatids or mature sperms in the central areas of seminiferous tubules.

Its subcellular location is the cell membrane. The protein localises to the cell projection. It localises to the lamellipodium membrane. It is found in the membrane raft. The protein resides in the apical cell membrane. It carries out the reaction Zn(2+)(in) = Zn(2+)(out). In terms of biological role, zinc-influx transporter which plays a role in zinc homeostasis and in the induction of epithelial-to-mesenchymal transition (EMT). When associated with SLC39A10, the heterodimer formed by SLC39A10 and SLC39A6 mediates cellular zinc uptake to trigger cells to undergo epithelial- to-mesenchymal transition (EMT). The SLC39A10-SLC39A6 heterodimer also controls NCAM1 phosphorylation and its integration into focal adhesion complexes during EMT. Zinc influx inactivates GSK3B, enabling unphosphorylated SNAI1 in the nucleus to down-regulate adherence genes such as E-cadherin, causing loss of cell adherence. In addition, the SLC39A10-SLC39A6 heterodimer plays an essentiel role in initiating mitosis by importing zinc into cells to initiate a pathway resulting in the onset of mitosis. Participates in the T-cell receptor signaling regulation by mediating cellular zinc uptake into activated lymphocytes. Regulates the zinc influx necessary for proper meiotic progression to metaphase II (MII) that allows the oocyte-to-egg transition. The protein is Zinc transporter ZIP6 of Mus musculus (Mouse).